A 556-amino-acid polypeptide reads, in one-letter code: MGQETNMLNAHQQLVRTSSGRPGHDKRQQTPGTATGLLKLLSSTPYAEQRSLGSGDGVIHAQKQRSRSAGQTPKKDRRLRGRNKKGQSSAEAEDVVPSSPRKPSFPFQWAWESFTTDGRALHQPSSVLAPGHQALPLPLAVHHHKSRRKSTPALPEAHSFCWKTEEPNLERRQQLRACSCTSIPPGRGTSQELEPSGEGGLQSPRKSSGSGLEPEESEPEGLGAEEAERGLIPGELPQLPRRGLILEEEQFSEATEEAEDGEHRAPWRRRTSSRRKGRNSGEEAWEESEVRRLESVSSSTNLREPQRRKPRAKELEGPWDLEKLQRKLQQELDCGPEKQPWKSLRAAVQASNWSRKAHPLGDDETFLFANFPNRTFHKRQEATRNLLRAWELQQREEQQQAEVRRAREQRVQHQVARCLAAYAPRGSRGPGAAQRKLEELRRQERQRFVEYQAELQGIQHRVQARPYLFQQAMQANARLNVTRRFSQVLSALGLDEEQLLAKAGKRDMEGAPRRHRSHRSVGARMEPSSQSPPKMEPTGSQADQHFAPNPDQELSP.

Residues 1 to 20 show a composition bias toward polar residues; the sequence is MGQETNMLNAHQQLVRTSSG. 2 disordered regions span residues 1–102 and 180–320; these read MGQE…SPRK and CTSI…GPWD. Positions 75-85 are enriched in basic residues; sequence KDRRLRGRNKK. Composition is skewed to acidic residues over residues 213–225 and 246–260; these read EPEE…LGAE and LEEE…EAED. A compositionally biased stretch (basic residues) spans 266 to 278; it reads PWRRRTSSRRKGR. The span at 304 to 320 shows a compositional bias: basic and acidic residues; it reads EPQRRKPRAKELEGPWD. The stretch at 387–463 forms a coiled coil; that stretch reads LRAWELQQRE…ELQGIQHRVQ (77 aa). Residues 503–556 are disordered; that stretch reads AGKRDMEGAPRRHRSHRSVGARMEPSSQSPPKMEPTGSQADQHFAPNPDQELSP. Residues 527–543 show a composition bias toward polar residues; sequence PSSQSPPKMEPTGSQAD.

The chain is Testis-specific protein 10-interacting protein (TSGA10IP) from Bos taurus (Bovine).